The sequence spans 233 residues: MSKQTRPHRNFYGRLKGKSLKAAQKRYLDEDLAALSPGAVGWEENPDRRPLDLPGLFEGKPVWLEIGFGGGEHLVHQAAQNPDIGIIGAEPYINGVAMLLGKIRRAGVENLAVHAGDARDLMDVLPAASIDRAFLLYPDPWPKARHHRRRFVTAEHLDPLARALKPGSVFRVATDIEDYVRQTLQEVPKHGFKWLANAPQDWRRPWPDWISTRYEQKALREGRTPHYLTFVRE.

4 residues coordinate S-adenosyl-L-methionine: E65, E90, D117, and D139. D139 is an active-site residue. Residues K143, D175, and 212–215 (TRYE) each bind substrate.

This sequence belongs to the class I-like SAM-binding methyltransferase superfamily. TrmB family.

It catalyses the reaction guanosine(46) in tRNA + S-adenosyl-L-methionine = N(7)-methylguanosine(46) in tRNA + S-adenosyl-L-homocysteine. It participates in tRNA modification; N(7)-methylguanine-tRNA biosynthesis. Functionally, catalyzes the formation of N(7)-methylguanine at position 46 (m7G46) in tRNA. The protein is tRNA (guanine-N(7)-)-methyltransferase of Roseobacter denitrificans (strain ATCC 33942 / OCh 114) (Erythrobacter sp. (strain OCh 114)).